Reading from the N-terminus, the 373-residue chain is MKFISVLALGATATSVLGASIPVDTQVEKFLIELAPGETRWVTEEEKWELKQNGQDFFDITDQDVGFTAAVAQPAVAYPTSIRHADAVNAMIATLSKENMQRDLTKLSSFHNRYYKSDYGKQSATWLQQQVQAAITASGANRYGAKVASFQHNFVQHSIIATIPGRSAEIVVVGAHQDSINGRSPMTGRAPGADDNGSGSVTILEALRGVLQDQTIVQGKAANTIEFHWYAGEEAGLLGSQAIFANYKQAGKKVKGMLNQDMTGYIKGMLDKGLKESFGIITDNVNASLTTFVRMVIKTYCQIPTIDTRCGYACSDHASANRNGFPSAMVAESPIDLLDPHLHTDTDTIDYLSFDHMIQHAKLIVGFVTELAK.

An N-terminal signal peptide occupies residues 1 to 18 (MKFISVLALGATATSVLG). 2 residues coordinate Zn(2+): histidine 176 and aspartate 195. Asparagine 196 carries an N-linked (GlcNAc...) asparagine glycan. Positions 234 and 261 each coordinate Zn(2+). N-linked (GlcNAc...) asparagine glycosylation is present at asparagine 286. Cysteines 310 and 314 form a disulfide. Residue histidine 343 participates in Zn(2+) binding.

The protein belongs to the peptidase M28 family. M28E subfamily. As to quaternary structure, monomer. Requires Zn(2+) as cofactor.

It is found in the secreted. Functionally, extracellular aminopeptidase which contributes to pathogenicity. The chain is Leucine aminopeptidase 1 (LAP1) from Arthroderma otae (strain ATCC MYA-4605 / CBS 113480) (Microsporum canis).